The following is a 98-amino-acid chain: NADH-ubiquinone oxidoreductase chain 4L (98 aa).

The next 3 helical transmembrane spans lie at 1 to 21 (MPLIYMNITLAFTMSLLGMLV), 29 to 49 (SLLCLEGMMLSLFIMITLMTL), and 58 to 78 (IMPITMLVFAACEAAVGLALL).

The protein belongs to the complex I subunit 4L family. Core subunit of respiratory chain NADH dehydrogenase (Complex I) which is composed of 45 different subunits.

It localises to the mitochondrion inner membrane. The catalysed reaction is a ubiquinone + NADH + 5 H(+)(in) = a ubiquinol + NAD(+) + 4 H(+)(out). In terms of biological role, core subunit of the mitochondrial membrane respiratory chain NADH dehydrogenase (Complex I) which catalyzes electron transfer from NADH through the respiratory chain, using ubiquinone as an electron acceptor. Part of the enzyme membrane arm which is embedded in the lipid bilayer and involved in proton translocation. The polypeptide is NADH-ubiquinone oxidoreductase chain 4L (MT-ND4L) (Pongo abelii (Sumatran orangutan)).